The sequence spans 212 residues: Imidazole glycerol phosphate synthase subunit HisH (212 aa).

Residues 4–210 form the Glutamine amidotransferase type-1 domain; that stretch reads NIGIIDYGMG…LKWLHEKNSD (207 aa). Cys-82 (nucleophile) is an active-site residue. Active-site residues include His-185 and Glu-187.

Heterodimer of HisH and HisF.

The protein localises to the cytoplasm. The enzyme catalyses 5-[(5-phospho-1-deoxy-D-ribulos-1-ylimino)methylamino]-1-(5-phospho-beta-D-ribosyl)imidazole-4-carboxamide + L-glutamine = D-erythro-1-(imidazol-4-yl)glycerol 3-phosphate + 5-amino-1-(5-phospho-beta-D-ribosyl)imidazole-4-carboxamide + L-glutamate + H(+). The catalysed reaction is L-glutamine + H2O = L-glutamate + NH4(+). The protein operates within amino-acid biosynthesis; L-histidine biosynthesis; L-histidine from 5-phospho-alpha-D-ribose 1-diphosphate: step 5/9. Its function is as follows. IGPS catalyzes the conversion of PRFAR and glutamine to IGP, AICAR and glutamate. The HisH subunit catalyzes the hydrolysis of glutamine to glutamate and ammonia as part of the synthesis of IGP and AICAR. The resulting ammonia molecule is channeled to the active site of HisF. This is Imidazole glycerol phosphate synthase subunit HisH from Prochlorococcus marinus (strain MIT 9211).